The following is a 1381-amino-acid chain: Hepatocyte growth factor receptor (1381 aa).

The signal sequence occupies residues 1-24; the sequence is MKAPAVLAPGILVLLFTLVQRSNG. Topologically, residues 25 to 934 are extracellular; it reads ECKEALTKSE…VQPDQNFTGL (910 aa). A Sema domain is found at 27–515; the sequence is KEALTKSEMN…TGKKITKIPL (489 aa). Asn-45 carries N-linked (GlcNAc...) asparagine glycosylation. 4 disulfide bridges follow: Cys-95–Cys-101, Cys-98–Cys-160, Cys-133–Cys-141, and Cys-172–Cys-175. Asn-106 carries N-linked (GlcNAc...) asparagine glycosylation. An N-linked (GlcNAc...) asparagine glycan is attached at Asn-149. N-linked (GlcNAc...) asparagine glycosylation occurs at Asn-202. 2 cysteine pairs are disulfide-bonded: Cys-298/Cys-363 and Cys-385/Cys-397. Asn-399 carries an N-linked (GlcNAc...) asparagine glycan. Disulfide bonds link Cys-520-Cys-538, Cys-526-Cys-561, Cys-529-Cys-545, and Cys-541-Cys-551. 3 IPT/TIG domains span residues 563 to 655, 657 to 739, and 742 to 836; these read PTIY…FSYV, PIIT…FSYR, and PIVY…LIYV. Thr-582 carries O-linked (Man) threonine glycosylation. Asn-607 and Asn-635 each carry an N-linked (GlcNAc...) asparagine glycan. O-linked (Man) threonine glycosylation is found at Thr-676 and Thr-761. Asn-785, Asn-879, and Asn-930 each carry an N-linked (GlcNAc...) asparagine glycan. A helical membrane pass occupies residues 935–955; it reads VAGVVSISIALLLLLGLFLWL. The Cytoplasmic portion of the chain corresponds to 956 to 1381; that stretch reads KKKKQIKDLG…QDNTDGEVDT (426 aa). Position 966 is a phosphoserine (Ser-966). At Thr-977 the chain carries Phosphothreonine. A phosphoserine mark is found at Ser-990, Ser-997, and Ser-1000. At Tyr-1003 the chain carries Phosphotyrosine. Positions 1078-1345 constitute a Protein kinase domain; that stretch reads VHFNEVIGRG…RISAIFSTFI (268 aa). Residues 1084 to 1092 and Lys-1110 contribute to the ATP site; that span reads IGRGHFGCV. Asp-1204 functions as the Proton acceptor in the catalytic mechanism. The tract at residues 1212 to 1381 is interaction with RANBP9; sequence LDEKFTVKVA…QDNTDGEVDT (170 aa). Tyr-1230 carries the phosphotyrosine modification. Phosphotyrosine; by autocatalysis is present on residues Tyr-1234 and Tyr-1235. Position 1289 is a phosphothreonine (Thr-1289). Positions 1320–1359 are interaction with MUC20; it reads WHPKAEMRPSFSELVSRISAIFSTFIGEHYVHVNATYVNV. Phosphotyrosine; by autocatalysis is present on residues Tyr-1349 and Tyr-1356. Tyr-1365 carries the post-translational modification Phosphotyrosine.

Belongs to the protein kinase superfamily. Tyr protein kinase family. As to quaternary structure, heterodimer made of an alpha chain (50 kDa) and a beta chain (145 kDa) which are disulfide linked. Binds PLXNB1. Interacts when phosphorylated with downstream effectors including STAT3, PIK3R1, SRC, PCLG1, GRB2 and GAB1. Interacts with SPSB1, SPSB2 and SPSB4. Interacts with INPP5D/SHIP1. When phosphorylated at Tyr-1356, interacts with INPPL1/SHIP2. Interacts with RANBP9 and RANBP10, as well as SPSB1, SPSB2, SPSB3 and SPSB4. SPSB1 binding occurs in the presence and in the absence of HGF, however HGF treatment has a positive effect on this interaction. Interacts with MUC20; prevents interaction with GRB2 and suppresses hepatocyte growth factor-induced cell proliferation. Interacts with GRB10. Interacts with PTPN1 and PTPN2. Interacts with HSP90AA1 and HSP90AB1; the interaction suppresses MET kinase activity. Interacts with tensin TNS3. Interacts (when phosphorylated) with tensin TNS4 (via SH2 domain); the interaction increases MET protein stability by inhibiting MET endocytosis and subsequent lysosomal degradation. Autophosphorylated in response to ligand binding on Tyr-1234 and Tyr-1235 in the kinase domain leading to further phosphorylation of Tyr-1349 and Tyr-1356 in the C-terminal multifunctional docking site. Dephosphorylated by PTPRJ at Tyr-1349 and Tyr-1365. Dephosphorylated by PTPN1 and PTPN2. Post-translationally, ubiquitinated. Ubiquitination by CBL regulates the receptor stability and activity through proteasomal degradation. In terms of processing, O-mannosylation of IPT/TIG domains by TMEM260 is required for protein maturation. O-mannosylated residues are composed of single mannose glycans that are not elongated or modified.

The protein resides in the membrane. The enzyme catalyses L-tyrosyl-[protein] + ATP = O-phospho-L-tyrosyl-[protein] + ADP + H(+). Receptor tyrosine kinase that transduces signals from the extracellular matrix into the cytoplasm by binding to hepatocyte growth factor/HGF ligand. Regulates many physiological processes including proliferation, scattering, morphogenesis and survival. Ligand binding at the cell surface induces autophosphorylation of MET on its intracellular domain that provides docking sites for downstream signaling molecules. Following activation by ligand, interacts with the PI3-kinase subunit PIK3R1, PLCG1, SRC, GRB2, STAT3 or the adapter GAB1. Recruitment of these downstream effectors by MET leads to the activation of several signaling cascades including the RAS-ERK, PI3 kinase-AKT, or PLCgamma-PKC. The RAS-ERK activation is associated with the morphogenetic effects while PI3K/AKT coordinates prosurvival effects. During embryonic development, MET signaling plays a role in gastrulation, development and migration of muscles and neuronal precursors, angiogenesis and kidney formation. In adults, participates in wound healing as well as organ regeneration and tissue remodeling. Also promotes differentiation and proliferation of hematopoietic cells. This Callithrix jacchus (White-tufted-ear marmoset) protein is Hepatocyte growth factor receptor (MET).